The chain runs to 149 residues: Transcriptional regulator MraZ (149 aa).

2 SpoVT-AbrB domains span residues 6–52 and 81–124; these read HAHR…TPPD and SEEV…DKRE.

This sequence belongs to the MraZ family. Forms oligomers.

It is found in the cytoplasm. The protein localises to the nucleoid. The polypeptide is Transcriptional regulator MraZ (Maridesulfovibrio salexigens (strain ATCC 14822 / DSM 2638 / NCIMB 8403 / VKM B-1763) (Desulfovibrio salexigens)).